A 1060-amino-acid polypeptide reads, in one-letter code: Carbamoyl phosphate synthase large chain (1060 aa).

The carboxyphosphate synthetic domain stretch occupies residues 1–401 (MPKRTDIRKI…SLLKAVRSLE (401 aa)). Residues Arg129, Arg169, Gly175, Gly176, Gln208, Ile210, Glu215, Gly241, Ile242, His243, Gln284, and Glu298 each contribute to the ATP site. Positions 133-327 (KNLMNQLNEP…IAKMAAKIAV (195 aa)) constitute an ATP-grasp 1 domain. Residues Gln284, Glu298, and Asn300 each coordinate Mg(2+). Mn(2+)-binding residues include Gln284, Glu298, and Asn300. The oligomerization domain stretch occupies residues 402–546 (IGTAHLELDG…YTTYEQENES (145 aa)). The segment at 547 to 929 (LVSAKPSILV…ALYKAFEASG (383 aa)) is carbamoyl phosphate synthetic domain. The region spanning 671 to 861 (DQLIQELNIP…MAQLATQLIL (191 aa)) is the ATP-grasp 2 domain. ATP-binding residues include Arg707, Arg746, Leu748, Glu752, Gly777, Val778, His779, Ser780, Gln820, and Glu832. Mg(2+) contacts are provided by Gln820, Glu832, and Asn834. The Mn(2+) site is built by Gln820, Glu832, and Asn834. One can recognise an MGS-like domain in the interval 930-1060 (MHLPSHGNVL…ESQSLLTKPL (131 aa)). The segment at 930–1060 (MHLPSHGNVL…ESQSLLTKPL (131 aa)) is allosteric domain.

It belongs to the CarB family. In terms of assembly, composed of two chains; the small (or glutamine) chain promotes the hydrolysis of glutamine to ammonia, which is used by the large (or ammonia) chain to synthesize carbamoyl phosphate. Tetramer of heterodimers (alpha,beta)4. Mg(2+) is required as a cofactor. The cofactor is Mn(2+).

The enzyme catalyses hydrogencarbonate + L-glutamine + 2 ATP + H2O = carbamoyl phosphate + L-glutamate + 2 ADP + phosphate + 2 H(+). The catalysed reaction is hydrogencarbonate + NH4(+) + 2 ATP = carbamoyl phosphate + 2 ADP + phosphate + 2 H(+). Its pathway is amino-acid biosynthesis; L-arginine biosynthesis; carbamoyl phosphate from bicarbonate: step 1/1. It functions in the pathway pyrimidine metabolism; UMP biosynthesis via de novo pathway; (S)-dihydroorotate from bicarbonate: step 1/3. In terms of biological role, large subunit of the glutamine-dependent carbamoyl phosphate synthetase (CPSase). CPSase catalyzes the formation of carbamoyl phosphate from the ammonia moiety of glutamine, carbonate, and phosphate donated by ATP, constituting the first step of 2 biosynthetic pathways, one leading to arginine and/or urea and the other to pyrimidine nucleotides. The large subunit (synthetase) binds the substrates ammonia (free or transferred from glutamine from the small subunit), hydrogencarbonate and ATP and carries out an ATP-coupled ligase reaction, activating hydrogencarbonate by forming carboxy phosphate which reacts with ammonia to form carbamoyl phosphate. The sequence is that of Carbamoyl phosphate synthase large chain from Latilactobacillus sakei subsp. sakei (strain 23K) (Lactobacillus sakei subsp. sakei).